The following is a 325-amino-acid chain: Tetraacyldisaccharide 4'-kinase (325 aa).

54-61 (SVGGTGKT) provides a ligand contact to ATP.

Belongs to the LpxK family.

The catalysed reaction is a lipid A disaccharide + ATP = a lipid IVA + ADP + H(+). It functions in the pathway glycolipid biosynthesis; lipid IV(A) biosynthesis; lipid IV(A) from (3R)-3-hydroxytetradecanoyl-[acyl-carrier-protein] and UDP-N-acetyl-alpha-D-glucosamine: step 6/6. Its function is as follows. Transfers the gamma-phosphate of ATP to the 4'-position of a tetraacyldisaccharide 1-phosphate intermediate (termed DS-1-P) to form tetraacyldisaccharide 1,4'-bis-phosphate (lipid IVA). The sequence is that of Tetraacyldisaccharide 4'-kinase from Rickettsia felis (strain ATCC VR-1525 / URRWXCal2) (Rickettsia azadi).